Reading from the N-terminus, the 343-residue chain is Methionine import ATP-binding protein MetN 1 (343 aa).

Positions 2–241 (IKLSNITKVF…PKTPLAQKFI (240 aa)) constitute an ABC transporter domain. 38-45 (GASGAGKS) is a binding site for ATP.

Belongs to the ABC transporter superfamily. Methionine importer (TC 3.A.1.24) family. As to quaternary structure, the complex is composed of two ATP-binding proteins (MetN), two transmembrane proteins (MetI) and a solute-binding protein (MetQ).

Its subcellular location is the cell inner membrane. The catalysed reaction is L-methionine(out) + ATP + H2O = L-methionine(in) + ADP + phosphate + H(+). It catalyses the reaction D-methionine(out) + ATP + H2O = D-methionine(in) + ADP + phosphate + H(+). In terms of biological role, part of the ABC transporter complex MetNIQ involved in methionine import. Responsible for energy coupling to the transport system. This chain is Methionine import ATP-binding protein MetN 1, found in Salmonella typhimurium (strain LT2 / SGSC1412 / ATCC 700720).